The following is a 610-amino-acid chain: UvrABC system protein C (610 aa).

The GIY-YIG domain occupies 16-94 (SQPGVYRMYD…IKLYQPRYNV (79 aa)). The 36-residue stretch at 204–239 (DQVLTQLISRMETASQNLEFEEAARIRDQIQAVRRV) folds into the UVR domain.

This sequence belongs to the UvrC family. Interacts with UvrB in an incision complex.

The protein localises to the cytoplasm. The UvrABC repair system catalyzes the recognition and processing of DNA lesions. UvrC both incises the 5' and 3' sides of the lesion. The N-terminal half is responsible for the 3' incision and the C-terminal half is responsible for the 5' incision. The chain is UvrABC system protein C from Escherichia coli O139:H28 (strain E24377A / ETEC).